Here is a 346-residue protein sequence, read N- to C-terminus: MLRDEVAVSARTLQWKCVESRADSKRLYYGRFILSPLMKGQADTIGIAMRRALLGEIEGTCITRAKSEKIPHEYSTIVGIEESVHEILMNLKEIVLRSNLYGTRDASICVKGPGYVTAQDIISPPSVEIVDTTQHIASLTEPVDFCIGLQIESNRGYRMKTPNNAQKGSYPIDAVFMPVRNANHSIHSYGNGNENQEILFLEIWTNGSLTPKEALYEASRNLIDLFIPFLHAEEQDQNLKDNQKNGVTLPFFTFHDGFDKLKKNKKEIELKCIFIDQSELPSRTYNCLKRANIHTLLDLLNKSQEDLMKIEHFRIEDVKQILDIIQKHFVVIDLPKNKFLIGNPSE.

Residues 1-233 (MLRDEVAVSA…DLFIPFLHAE (233 aa)) form an alpha N-terminal domain (alpha-NTD) region. The tract at residues 268–346 (IELKCIFIDQ…NKFLIGNPSE (79 aa)) is alpha C-terminal domain (alpha-CTD).

It belongs to the RNA polymerase alpha chain family. In terms of assembly, in plastids the minimal PEP RNA polymerase catalytic core is composed of four subunits: alpha, beta, beta', and beta''. When a (nuclear-encoded) sigma factor is associated with the core the holoenzyme is formed, which can initiate transcription.

It is found in the plastid. Its subcellular location is the chloroplast. It carries out the reaction RNA(n) + a ribonucleoside 5'-triphosphate = RNA(n+1) + diphosphate. Functionally, DNA-dependent RNA polymerase catalyzes the transcription of DNA into RNA using the four ribonucleoside triphosphates as substrates. This Ranunculus macranthus (Large buttercup) protein is DNA-directed RNA polymerase subunit alpha.